The chain runs to 35 residues: MHTYAAIFGVVAILLHLIENRRCVKLYVRETLRGV.

This is an uncharacterized protein from Archaeoglobus fulgidus (strain ATCC 49558 / DSM 4304 / JCM 9628 / NBRC 100126 / VC-16).